The following is a 291-amino-acid chain: Undecaprenyl-diphosphatase (291 aa).

The next 8 helical transmembrane spans lie at 1-21 (MFIIELIKGIILGVVEGLTEF), 48-68 (SAFTFKIVIQLGSVFAAAWVF), 102-122 (LHVLVGMVPAGILGLLFDDFI), 126-146 (LFSVPTVMIGLFVGAIYMIIA), 162-182 (ISYFQAFVIGISQAVAMWPGF), 203-223 (SDFTFIMAVPIMLAASGLSLL), 231-251 (IADIPFYILGFLAAFTVGLIA), and 267-287 (FAIYRIVLVIFIAILYFGFGI).

It belongs to the UppP family.

It localises to the cell membrane. It carries out the reaction di-trans,octa-cis-undecaprenyl diphosphate + H2O = di-trans,octa-cis-undecaprenyl phosphate + phosphate + H(+). Functionally, catalyzes the dephosphorylation of undecaprenyl diphosphate (UPP). Confers resistance to bacitracin. This is Undecaprenyl-diphosphatase from Staphylococcus aureus (strain USA300).